The chain runs to 673 residues: L-type lectin-domain containing receptor kinase SIT2 (673 aa).

An N-terminal signal peptide occupies residues 1–27 (MVLPKPEMPFFVLLLFLGLGCLRPAAA). Topologically, residues 28–296 (TDERFVFNGF…FPKPRSKTLE (269 aa)) are extracellular. Residues 32–270 (FVFNGFTGAN…VLGWSFKMNG (239 aa)) form a legume-lectin like region. Residues N41, N60, N82, N118, N138, N191, N214, N235, and N276 are each glycosylated (N-linked (GlcNAc...) asparagine). The helical transmembrane segment at 297–317 (IVLPIASAVLVFAVAAAVFVF) threads the bilayer. The Cytoplasmic segment spans residues 318 to 673 (MRRRRMFSEL…GTFSDLSGGR (356 aa)). A Protein kinase domain is found at 352 to 631 (FSDKRLLGIG…LEGDVPLPEL (280 aa)). Residues 358-366 (LGIGGFGRV) and K381 contribute to the ATP site. Catalysis depends on D477, which acts as the Proton acceptor.

This sequence in the C-terminal section; belongs to the protein kinase superfamily. Ser/Thr protein kinase family. In the N-terminal section; belongs to the leguminous lectin family. As to expression, mainly expressed in root epidermal cells.

The protein localises to the cell membrane. It catalyses the reaction L-seryl-[protein] + ATP = O-phospho-L-seryl-[protein] + ADP + H(+). It carries out the reaction L-threonyl-[protein] + ATP = O-phospho-L-threonyl-[protein] + ADP + H(+). Functionally, lectin-domain containing receptor kinase involved in salt stress response. Acts as a negative regulator of salt tolerance. The chain is L-type lectin-domain containing receptor kinase SIT2 from Oryza sativa subsp. japonica (Rice).